A 360-amino-acid polypeptide reads, in one-letter code: Serine/threonine-protein kinase SAPK4 (360 aa).

The region spanning 4-260 is the Protein kinase domain; sequence YEAVRDIGSG…MKEIKSHPWF (257 aa). ATP is bound by residues 10–18 and lysine 33; that span reads IGSGNFGVA. Aspartate 123 (proton acceptor) is an active-site residue. Residues 303–360 form a disordered region; the sequence is TMPKSSRTGYWSDAGSDEEEKEEEERPEENEEEEEDEYDKRVKEVHASGELRMSSLRI. Over residues 317–339 the composition is skewed to acidic residues; sequence GSDEEEKEEEERPEENEEEEEDE. Basic and acidic residues predominate over residues 340-351; that stretch reads YDKRVKEVHASG.

This sequence belongs to the protein kinase superfamily. Ser/Thr protein kinase family. In terms of processing, may be phosphorylated. In terms of tissue distribution, expressed in leaf blades, leaf sheaths and roots. Expressed in shoots and roots of young seedlings.

The enzyme catalyses L-seryl-[protein] + ATP = O-phospho-L-seryl-[protein] + ADP + H(+). The catalysed reaction is L-threonyl-[protein] + ATP = O-phospho-L-threonyl-[protein] + ADP + H(+). With respect to regulation, activated by hyperosmotic stress. Functionally, may play a role in signal transduction of hyperosmotic response. The polypeptide is Serine/threonine-protein kinase SAPK4 (SAPK4) (Oryza sativa subsp. japonica (Rice)).